A 336-amino-acid chain; its full sequence is PTS system glucitol/sorbitol-specific EIIB component (336 aa).

Residues 3–195 form the PTS EIIB type-5 domain; the sequence is KYNAIKIVKG…AVQSMITTIL (193 aa). The active-site Phosphocysteine intermediate; for EIIB activity is the C75. C75 bears the Phosphocysteine; by EIIA mark. The next 5 membrane-spanning stretches (helical) occupy residues 194–214, 228–248, 250–270, 278–298, and 312–332; these read ILPF…SGFG, GIGL…ALLG, GAVI…KGTI, ALFA…LGLA, and VLYS…VASI.

It localises to the cell membrane. It carries out the reaction D-sorbitol(out) + N(pros)-phospho-L-histidyl-[protein] = D-sorbitol 6-phosphate(in) + L-histidyl-[protein]. The phosphoenolpyruvate-dependent sugar phosphotransferase system (sugar PTS), a major carbohydrate active transport system, catalyzes the phosphorylation of incoming sugar substrates concomitantly with their translocation across the cell membrane. The enzyme II complex composed of SrlA, SrlB and SrlE is involved in glucitol/sorbitol transport. This Clostridium beijerinckii (strain ATCC 51743 / NCIMB 8052) (Clostridium acetobutylicum) protein is PTS system glucitol/sorbitol-specific EIIB component (srlE).